We begin with the raw amino-acid sequence, 97 residues long: RxLR effector protein PexRD21 (97 aa).

The first 21 residues, 1–21 (MRLSYILVVVIAVTLQACVCA), serve as a signal peptide directing secretion. Positions 48–66 (RLLRGVKKRTAEREVQEER) match the RxLR-dEER motif.

It belongs to the RxLR effector family.

The protein resides in the secreted. The protein localises to the host cell membrane. Functionally, effector that is involved in host plant infection. Contributes to virulence during the early infection stage, by inhibiting plant defense responses induced by both PAMP-triggered immunity (PTI) and effector-triggered immunity (ETI). The sequence is that of RxLR effector protein PexRD21 from Phytophthora infestans (strain T30-4) (Potato late blight agent).